A 140-amino-acid polypeptide reads, in one-letter code: MAMTVHCDIVSAEQEIFSGAIELLVAASVEGDVGINYGHAPLLTALKPGPVRVKKLDGEEEIFYVSGGYLEVQPHVVTVLADTALRAGDMDEAAAEAAMKEAEQAIQSSEGLDYSKAAAQLAESAAQLRTLQAIRKKLQR.

This sequence belongs to the ATPase epsilon chain family. In terms of assembly, F-type ATPases have 2 components, CF(1) - the catalytic core - and CF(0) - the membrane proton channel. CF(1) has five subunits: alpha(3), beta(3), gamma(1), delta(1), epsilon(1). CF(0) has three main subunits: a, b and c.

It is found in the cell inner membrane. Its function is as follows. Produces ATP from ADP in the presence of a proton gradient across the membrane. The chain is ATP synthase epsilon chain from Saccharophagus degradans (strain 2-40 / ATCC 43961 / DSM 17024).